Consider the following 142-residue polypeptide: uncharacterized protein (142 aa).

The protein belongs to the GlcG family.

This is an uncharacterized protein from Citrobacter freundii.